Here is a 702-residue protein sequence, read N- to C-terminus: Arginine decarboxylase 1, chloroplastic (702 aa).

Residues 1–52 (MPALAFVDTPIDTFSSIFTPSSVSTAVVDGSCHWSPSLSSSLYRIDGWGAPY) constitute a chloroplast transit peptide. Residue K136 is modified to N6-(pyridoxal phosphate)lysine. Residues S288, G325, and 374–377 (ESGR) contribute to the pyridoxal 5'-phosphate site. Residue 320–330 (IDIGGGLGIDY) coordinates substrate. 436–437 (YV) is a binding site for substrate. The Proton donor; shared with dimeric partner role is filled by C524. D525 provides a ligand contact to substrate. Y565 contacts pyridoxal 5'-phosphate.

This sequence belongs to the Orn/Lys/Arg decarboxylase class-II family. SpeA subfamily. As to quaternary structure, homodimer. Only the dimer is catalytically active, as the active sites are constructed of residues from both monomers. May form a head-to-tail homodimer. Homodimer and heterodimer with ADC2. It depends on pyridoxal 5'-phosphate as a cofactor. Requires Mg(2+) as cofactor.

The protein localises to the plastid. It is found in the chloroplast. It localises to the cytoplasm. The protein resides in the cytosol. The enzyme catalyses L-arginine + H(+) = agmatine + CO2. The protein operates within amine and polyamine biosynthesis; agmatine biosynthesis; agmatine from L-arginine: step 1/1. In terms of biological role, required for the biosynthesis of putrescine. Catalyzes the first step of polyamine (PA) biosynthesis to produce putrescine from arginine. Is a minor contributor to basal arginine decarboxylase (ADC) activity and putrescine biosynthesis. Accumulation of putrescine plays a positive role in freezing tolerance. Production of polyamines is essential for normal seed development. Controls PA homeostasis which is crucial for normal plant growth and development. The sequence is that of Arginine decarboxylase 1, chloroplastic from Arabidopsis thaliana (Mouse-ear cress).